Here is a 226-residue protein sequence, read N- to C-terminus: Pre-mRNA-splicing factor SPF27 (226 aa).

Ala-2 carries the N-acetylalanine modification. Ser-94 carries the post-translational modification Phosphoserine. A coiled-coil region spans residues 139 to 223; the sequence is YNENLVHMIE…HGEANKENIR (85 aa).

Belongs to the SPF27 family. As to quaternary structure, component of the pre-catalytic and catalytic spliceosome complexes. Component of the postcatalytic spliceosome P complex. Component of the PRP19-CDC5L splicing complex composed of a core complex comprising a homotetramer of PRPF19, CDC5L, PLRG1 and BCAS2, and at least three less stably associated proteins CTNNBL1, CWC15 and HSPA8. Interacts directly in the complex with PRPF19, CDC5L and PLRG1.

It is found in the nucleus. Its subcellular location is the nucleolus. Its function is as follows. Required for pre-mRNA splicing as component of the activated spliceosome. Component of the PRP19-CDC5L complex that forms an integral part of the spliceosome and is required for activating pre-mRNA splicing. May have a scaffolding role in the spliceosome assembly as it contacts all other components of the core complex. The PRP19-CDC5L complex may also play a role in the response to DNA damage (DDR). The polypeptide is Pre-mRNA-splicing factor SPF27 (BCAS2) (Pongo abelii (Sumatran orangutan)).